A 305-amino-acid chain; its full sequence is Ribosomal RNA small subunit methyltransferase H (305 aa).

S-adenosyl-L-methionine is bound by residues 37–39 (GGH), D57, F85, D101, and H108.

This sequence belongs to the methyltransferase superfamily. RsmH family.

The protein resides in the cytoplasm. The catalysed reaction is cytidine(1402) in 16S rRNA + S-adenosyl-L-methionine = N(4)-methylcytidine(1402) in 16S rRNA + S-adenosyl-L-homocysteine + H(+). Functionally, specifically methylates the N4 position of cytidine in position 1402 (C1402) of 16S rRNA. The protein is Ribosomal RNA small subunit methyltransferase H of Parabacteroides distasonis (strain ATCC 8503 / DSM 20701 / CIP 104284 / JCM 5825 / NCTC 11152).